The chain runs to 320 residues: Ribosome production factor 2 homolog (320 aa).

In terms of domain architecture, Brix spans 30 to 234 (RTMLFLDGRK…IRRTKIASED (205 aa)). Positions 268-320 (LGKQQTGSIQTRRVKALRKTPEEKKENRQRKKVALKAAAAEALASQGNNPFSS) are disordered. The segment covering 302–311 (LKAAAAEALA) has biased composition (low complexity).

This sequence belongs to the RPF2 family.

The protein resides in the nucleus. Its subcellular location is the nucleolus. Its function is as follows. Required for normal assembly of the mitotic spindle. May be involved in both centrosome-dependent and centrosome-independent spindle assembly programs. In Drosophila melanogaster (Fruit fly), this protein is Ribosome production factor 2 homolog.